Consider the following 69-residue polypeptide: MNKDEAGGNWKQFKGKVKEQWGKLTDDDMTIIEGKRDQLVGKIQERYGYQKDQAEKEVDSWEKRHDYRW.

It belongs to the UPF0337 (CsbD) family.

This Escherichia coli O6:H1 (strain CFT073 / ATCC 700928 / UPEC) protein is UPF0337 protein YjbJ (yjbJ).